The primary structure comprises 436 residues: UDP-N-acetylmuramate--L-alanine ligase (436 aa).

110–116 (GAHGKTS) provides a ligand contact to ATP.

Belongs to the MurCDEF family.

The protein localises to the cytoplasm. It catalyses the reaction UDP-N-acetyl-alpha-D-muramate + L-alanine + ATP = UDP-N-acetyl-alpha-D-muramoyl-L-alanine + ADP + phosphate + H(+). The protein operates within cell wall biogenesis; peptidoglycan biosynthesis. Functionally, cell wall formation. This is UDP-N-acetylmuramate--L-alanine ligase from Lacticaseibacillus paracasei (strain ATCC 334 / BCRC 17002 / CCUG 31169 / CIP 107868 / KCTC 3260 / NRRL B-441) (Lactobacillus paracasei).